We begin with the raw amino-acid sequence, 39 residues long: Cytochrome b6-f complex subunit 5 (39 aa).

Residues 5 to 25 (LLCGIVLGLVPITLLGLFVAA) form a helical membrane-spanning segment.

It belongs to the PetG family. The 4 large subunits of the cytochrome b6-f complex are cytochrome b6, subunit IV (17 kDa polypeptide, PetD), cytochrome f and the Rieske protein, while the 4 small subunits are PetG, PetL, PetM and PetN. The complex functions as a dimer.

Its subcellular location is the cellular thylakoid membrane. Its function is as follows. Component of the cytochrome b6-f complex, which mediates electron transfer between photosystem II (PSII) and photosystem I (PSI), cyclic electron flow around PSI, and state transitions. PetG is required for either the stability or assembly of the cytochrome b6-f complex. The polypeptide is Cytochrome b6-f complex subunit 5 (Prochlorococcus marinus (strain SARG / CCMP1375 / SS120)).